Here is a 348-residue protein sequence, read N- to C-terminus: D-alanine--D-alanine ligase (348 aa).

The ATP-grasp domain occupies Lys132–Val334. Leu162–Glu217 serves as a coordination point for ATP. Mg(2+) contacts are provided by Asp288, Glu301, and Asn303.

The protein belongs to the D-alanine--D-alanine ligase family. Mg(2+) serves as cofactor. The cofactor is Mn(2+).

The protein resides in the cytoplasm. The catalysed reaction is 2 D-alanine + ATP = D-alanyl-D-alanine + ADP + phosphate + H(+). It functions in the pathway cell wall biogenesis; peptidoglycan biosynthesis. In terms of biological role, cell wall formation. This chain is D-alanine--D-alanine ligase, found in Streptococcus thermophilus (strain CNRZ 1066).